A 418-amino-acid polypeptide reads, in one-letter code: Oxalate:formate antiporter (418 aa).

The next 12 helical transmembrane spans lie at Trp-17–Trp-37, Leu-48–Gly-68, Ile-84–Asp-104, Ala-108–Met-128, Leu-141–Ile-161, Ala-172–Ile-192, Phe-222–Asn-242, Leu-250–Gly-270, Met-288–Leu-308, Val-311–Phe-331, Phe-350–Ala-370, and Ala-378–Pro-398. Oxalate is bound at residue Lys-355.

The protein belongs to the major facilitator superfamily. OFA (TC 2.A.1.11) family. Monomer.

It localises to the cell inner membrane. In terms of biological role, anion transporter that carries out the exchange of divalent oxalate with monovalent formate, the product of oxalate decarboxylation, at the plasma membrane, and in doing so catalyzes the vectorial portion of a proton-motive metabolic cycle that drives ATP synthesis. The protein is Oxalate:formate antiporter (oxlT) of Oxalobacter formigenes.